The primary structure comprises 162 residues: Endoribonuclease YbeY (162 aa).

The Zn(2+) site is built by His128, His132, and His138.

This sequence belongs to the endoribonuclease YbeY family. It depends on Zn(2+) as a cofactor.

It is found in the cytoplasm. Functionally, single strand-specific metallo-endoribonuclease involved in late-stage 70S ribosome quality control and in maturation of the 3' terminus of the 16S rRNA. The polypeptide is Endoribonuclease YbeY (Lactococcus lactis subsp. cremoris (strain SK11)).